The primary structure comprises 64 residues: Large ribosomal subunit protein bL35 (64 aa).

Residues 1-15 (MPKNKTHSGTAKRFR) are compositionally biased toward basic residues. A disordered region spans residues 1–27 (MPKNKTHSGTAKRFRVTGSGKLRREQA).

This sequence belongs to the bacterial ribosomal protein bL35 family.

This Saccharopolyspora erythraea (strain ATCC 11635 / DSM 40517 / JCM 4748 / NBRC 13426 / NCIMB 8594 / NRRL 2338) protein is Large ribosomal subunit protein bL35.